We begin with the raw amino-acid sequence, 172 residues long: EPIDERMAL PATTERNING FACTOR-like protein 7 (172 aa).

A signal peptide spans 1–27 (MDHVNPTLFHLKSLSIFTLTLLYISSP). 4 disulfide bridges follow: Cys-128-Cys-159, Cys-132-Cys-138, Cys-135-Cys-161, and Cys-147-Cys-153.

It belongs to the plant cysteine rich small secretory peptide family. Epidermal patterning factor subfamily.

It is found in the secreted. In terms of biological role, controls stomatal patterning. This Arabidopsis thaliana (Mouse-ear cress) protein is EPIDERMAL PATTERNING FACTOR-like protein 7.